A 747-amino-acid chain; its full sequence is Polyribonucleotide nucleotidyltransferase (747 aa).

Residues Asp-502 and Asp-508 each coordinate Mg(2+). Residues 569–628 (PRMLTITIDPDKIRDIIGPGGKIIKKIIEETGVEIDVEDDGRVFIASTDAAAGERALKII) form the KH domain. An S1 motif domain is found at 638-712 (GKVYNGKVTR…PQGRLKLSRK (75 aa)). A disordered region spans residues 718 to 747 (STVGEGGHRHFRRAGREGGHRGLNNRRQSR).

This sequence belongs to the polyribonucleotide nucleotidyltransferase family. Requires Mg(2+) as cofactor.

Its subcellular location is the cytoplasm. It carries out the reaction RNA(n+1) + phosphate = RNA(n) + a ribonucleoside 5'-diphosphate. Its function is as follows. Involved in mRNA degradation. Catalyzes the phosphorolysis of single-stranded polyribonucleotides processively in the 3'- to 5'-direction. This Moorella thermoacetica (strain ATCC 39073 / JCM 9320) protein is Polyribonucleotide nucleotidyltransferase.